Here is a 272-residue protein sequence, read N- to C-terminus: Centromere protein V-like protein 1 (272 aa).

Residues 1–17 (MGRVRNRATAQRRRRKR) are compositionally biased toward basic residues. Disordered stretches follow at residues 1 to 23 (MGRV…DPPA) and 65 to 95 (RRVR…KDLD). Over residues 79-90 (APTPDPPGPAPS) the composition is skewed to pro residues. Residues 133–246 (HTGGCHCGAV…EEVGGGDPGE (114 aa)) form the CENP-V/GFA domain. The Zn(2+) site is built by C137, C139, C157, C159, C162, C201, and C204. Positions 240–272 (GGGDPGEEAAEEHKAIHKTSSQSAPACPREQEQ) are disordered.

Belongs to the Gfa family. It depends on Zn(2+) as a cofactor.

In Homo sapiens (Human), this protein is Centromere protein V-like protein 1.